Here is a 388-residue protein sequence, read N- to C-terminus: MDAQLTYTMGLLEQGYLSARVCSMGNSTSRLYSALAKTLSSSAAVSQELLEASQHDQSEPLDPKELLDECQVALQDRPARLHRDFFSLRSESSSQQPRTFRVMQWNILAQALGEGKDNFIMCPMEALKWEERKYLILEEILMYQPDVLCLQEVDHYFDTFQPILSRLGYQCTFLAKPWSPCLDVEHNNGPDGCALFFLQDRFQLVNSAKIRLSARTLKTNQVAIAETLQCCETGRQLCFAVTHLKARTGWERFRLAQGSDLLDNLESITQGATVPLIICGDFNADPTEEVYKRFASSSLNLNSAYKLLSEDGESEPPYTTWKIRTTGESCHTLDYIWYSQHALRVNAALGLPTEEQIGPNRLPSFNYPSDHLSLVCDFSFNEDPARLL.

E152 provides a ligand contact to Mg(2+). Substrate is bound by residues E152, 176 to 178 (KPW), N220, 243 to 246 (HLKA), 281 to 283 (DFN), and H371.

Belongs to the CCR4/nocturin family. Mg(2+) serves as cofactor. In terms of tissue distribution, expressed only in the photoreceptors of the retina. Expression is controlled by the retinal circadian clock.

It is found in the cytoplasm. The protein resides in the nucleus. The protein localises to the perinuclear region. Its subcellular location is the mitochondrion. It catalyses the reaction NADP(+) + H2O = phosphate + NAD(+). The enzyme catalyses NADPH + H2O = phosphate + NADH. Functionally, phosphatase which catalyzes the conversion of NADP(+) to NAD(+) and of NADPH to NADH. Shows a small preference for NADPH over NADP(+). Component of the circadian clock or downstream effector of clock function. Exhibits a high amplitude circadian rhythm with maximal levels in early evening. In constant darkness or constant light, the amplitude of the rhythm decreases. In Xenopus laevis (African clawed frog), this protein is Nocturnin.